A 370-amino-acid chain; its full sequence is Cytochrome b (370 aa).

A run of 4 helical transmembrane segments spans residues 25–45 (FGSM…FLAV), 69–90 (WMMQ…YIHI), 105–125 (WLSG…GYVL), and 170–190 (FFAL…LHIL). The heme b site is built by histidine 75 and histidine 89. Heme b contacts are provided by histidine 174 and histidine 188. Histidine 193 contacts a ubiquinone. Transmembrane regions (helical) follow at residues 218 to 238 (YKDM…VSFF), 280 to 300 (LGGA…PFTH), 312 to 332 (FMQL…WTAT), and 339 to 358 (FTTI…ISNP).

Belongs to the cytochrome b family. The cytochrome bc1 complex contains 3 respiratory subunits (MT-CYB, CYC1 and UQCRFS1), 2 core proteins (UQCRC1 and UQCRC2) and probably 6 low-molecular weight proteins. Heme b serves as cofactor.

It localises to the mitochondrion inner membrane. Functionally, component of the ubiquinol-cytochrome c reductase complex (complex III or cytochrome b-c1 complex) that is part of the mitochondrial respiratory chain. The b-c1 complex mediates electron transfer from ubiquinol to cytochrome c. Contributes to the generation of a proton gradient across the mitochondrial membrane that is then used for ATP synthesis. This Chilabothrus exsul (Abaco Island boa) protein is Cytochrome b (MT-CYB).